The primary structure comprises 360 residues: MIKVRLQKDNDLMDILNIMAPGTPLRDGLENILRAKTGGLIVIGDSEEILDIVDGGFTIDAEYSPSYVYELAKMDGAIILSGDVKRIIRANAQLMPDPSVPTFETGTRHRTADRIAKQTGNIVIAISQRRNIITIYRNNIKYVLRDSSVILGKANQALQTLEKYVSVLDKVINNLNVLEFRDLVTLFDVMTAIQRTEMVMRIVWEMERYICELGNEARLISMQLNELVRYVEEDEILLIRDYCETYMDYTEVYDEIQSMSSEELINLDQISKILGYTGVPLVDTFISPRGYRMLHRIPRIPSNVIENVVKNFKELKAVMEASYEQLDKVEGIGEARAKAIKNGLRRLKEQANIDKNIVTR.

The DAC domain occupies 9–147 (DNDLMDILNI…NNIKYVLRDS (139 aa)). ATP contacts are provided by residues glycine 76, leucine 94, and 107-111 (TRHRT).

Belongs to the DisA family. As to quaternary structure, homooctamer. Mg(2+) is required as a cofactor.

The enzyme catalyses 2 ATP = 3',3'-c-di-AMP + 2 diphosphate. In terms of biological role, participates in a DNA-damage check-point that is active prior to asymmetric division when DNA is damaged. DisA forms globular foci that rapidly scan along the chromosomes during sporulation, searching for lesions. When a lesion is present, DisA pauses at the lesion site. This triggers a cellular response that culminates in a temporary block in sporulation initiation. Its function is as follows. Also has diadenylate cyclase activity, catalyzing the condensation of 2 ATP molecules into cyclic di-AMP (c-di-AMP). c-di-AMP acts as a signaling molecule that couples DNA integrity with progression of sporulation. The rise in c-di-AMP level generated by DisA while scanning the chromosome, operates as a positive signal that advances sporulation; upon encountering a lesion, the DisA focus arrests at the damaged site and halts c-di-AMP synthesis. The protein is DNA integrity scanning protein DisA of Clostridium tetani (strain Massachusetts / E88).